A 388-amino-acid polypeptide reads, in one-letter code: Processive diacylglycerol beta-glucosyltransferase (388 aa).

The protein belongs to the glycosyltransferase 28 family. UgtP subfamily.

It is found in the cell membrane. The catalysed reaction is a 1,2-diacyl-3-O-(beta-D-glucopyranosyl)-sn-glycerol + UDP-alpha-D-glucose = a 1,2-diacyl-3-O-(beta-D-Glc-(1-&gt;6)-beta-D-Glc)-sn-glycerol + UDP + H(+). It carries out the reaction a 1,2-diacyl-3-O-(beta-D-Glc-(1-&gt;6)-beta-D-Glc)-sn-glycerol + UDP-alpha-D-glucose = a 1,2-diacyl-3-O-(beta-D-Glc-(1-&gt;6)-beta-D-Glc-(1-&gt;6)-beta-D-Glc)-sn-glycerol + UDP + H(+). The enzyme catalyses a 1,2-diacyl-sn-glycerol + UDP-alpha-D-glucose = a 1,2-diacyl-3-O-(beta-D-glucopyranosyl)-sn-glycerol + UDP + H(+). The protein operates within glycolipid metabolism; diglucosyl-diacylglycerol biosynthesis. In terms of biological role, processive glucosyltransferase involved in the biosynthesis of both the bilayer- and non-bilayer-forming membrane glucolipids. Is able to successively transfer up to three glucosyl residues to diacylglycerol (DAG), thereby catalyzing the formation of beta-monoglucosyl-DAG (3-O-(beta-D-glucopyranosyl)-1,2-diacyl-sn-glycerol), beta-diglucosyl-DAG (3-O-(beta-D-glucopyranosyl-beta-(1-&gt;6)-D-glucopyranosyl)-1,2-diacyl-sn-glycerol) and beta-triglucosyl-DAG (3-O-(beta-D-glucopyranosyl-beta-(1-&gt;6)-D-glucopyranosyl-beta-(1-&gt;6)-D-glucopyranosyl)-1,2-diacyl-sn-glycerol). Beta-diglucosyl-DAG is the predominant glycolipid found in Bacillales and is also used as a membrane anchor for lipoteichoic acid (LTA). This Bacillus cereus (strain AH187) protein is Processive diacylglycerol beta-glucosyltransferase.